Consider the following 345-residue polypeptide: Protein RecA (345 aa).

Position 66-73 (66-73 (GPESSGKT)) interacts with ATP.

It belongs to the RecA family.

The protein localises to the cytoplasm. In terms of biological role, can catalyze the hydrolysis of ATP in the presence of single-stranded DNA, the ATP-dependent uptake of single-stranded DNA by duplex DNA, and the ATP-dependent hybridization of homologous single-stranded DNAs. It interacts with LexA causing its activation and leading to its autocatalytic cleavage. This Acidithiobacillus ferrooxidans (strain ATCC 23270 / DSM 14882 / CIP 104768 / NCIMB 8455) (Ferrobacillus ferrooxidans (strain ATCC 23270)) protein is Protein RecA.